A 345-amino-acid polypeptide reads, in one-letter code: Phosphoribosylformylglycinamidine cyclo-ligase (345 aa).

The protein belongs to the AIR synthase family.

The protein localises to the cytoplasm. The catalysed reaction is 2-formamido-N(1)-(5-O-phospho-beta-D-ribosyl)acetamidine + ATP = 5-amino-1-(5-phospho-beta-D-ribosyl)imidazole + ADP + phosphate + H(+). It functions in the pathway purine metabolism; IMP biosynthesis via de novo pathway; 5-amino-1-(5-phospho-D-ribosyl)imidazole from N(2)-formyl-N(1)-(5-phospho-D-ribosyl)glycinamide: step 2/2. The polypeptide is Phosphoribosylformylglycinamidine cyclo-ligase (Shewanella denitrificans (strain OS217 / ATCC BAA-1090 / DSM 15013)).